The following is a 233-amino-acid chain: Tail needle protein gp26 (233 aa).

An interaction with tail hub protein gp10 region spans residues 2–60 (ADPSLNNPVVIQATRLDASILPRNVFSKSYLLYVIAQGTDVGAIAGKANEAGQGAYDAQ). Trimerization heptad repeat repeat units follow at residues 61–67 (VKNDEQD), 70–76 (LADHEAR), 77–83 (IKQLRID), 84–90 (VDDHESR), 91–97 (ITANTKA), 98–104 (ITALNVR), 105–111 (VTTAEGE), 112–118 (IASLQTN), 119–125 (VSALDGR), 126–132 (VTTAENN), and 133–139 (ISALQAD). A coiled-coil region spans residues 61–139 (VKNDEQDVEL…ENNISALQAD (79 aa)). The inverted coiled coil stretch occupies residues 175-233 (GWTAATGTANKGVFDADLTFAVSDTYTQSEIQAIANALITERRRTKALEDALRAHGLID). A Basic cluster motif is present at residues 216 to 220 (RRRTK).

This sequence belongs to the Lederbergvirus tail needle protein family. In terms of assembly, homotrimer. The trimer forms an elongated coiled-coil (240A x 25A). The N-terminal tip may exist in a pre-ejection extended conformation, which may fold into a trimer of hairpins only after ejection into the host. Interacts (via N-terminus) with the tail hub gp10. Interacts with the head-to-tail adapter protein gp4.

The protein localises to the virion. Functionally, cell-perforating component and plug protein of the phage tail machine. Together with gp4 and gp10, gp26 is required for stabilization of the condensed DNA within the capsid by plugging the hole through which the DNA enters. Host cell membrane perforation allows viral DNA ejection. The needle penetrates the host outer membrane. The needle is released and the internal head protein gp7 is ejected to form an extra-cellular channel. The protein is Tail needle protein gp26 (26) of Salmonella typhimurium (Bacteriophage P22).